The sequence spans 314 residues: Probable cell division protein WhiA (314 aa).

Positions 274–305 (SLAELGDRLEISKSGANHRMRKLKALEDMINA) form a DNA-binding region, H-T-H motif.

It belongs to the WhiA family.

Functionally, involved in cell division and chromosome segregation. This is Probable cell division protein WhiA from Leuconostoc citreum (strain KM20).